The primary structure comprises 176 residues: NADH-quinone oxidoreductase subunit I 2 (176 aa).

2 consecutive 4Fe-4S ferredoxin-type domains span residues 45–77 and 87–116; these read IVLT…MEAA and RWFR…MTPD. [4Fe-4S] cluster is bound by residues Cys-57, Cys-60, Cys-63, Cys-67, Cys-96, Cys-99, Cys-102, and Cys-106.

Belongs to the complex I 23 kDa subunit family. NDH-1 is composed of 14 different subunits. Subunits NuoA, H, J, K, L, M, N constitute the membrane sector of the complex. The cofactor is [4Fe-4S] cluster.

It is found in the cell inner membrane. It carries out the reaction a quinone + NADH + 5 H(+)(in) = a quinol + NAD(+) + 4 H(+)(out). In terms of biological role, NDH-1 shuttles electrons from NADH, via FMN and iron-sulfur (Fe-S) centers, to quinones in the respiratory chain. The immediate electron acceptor for the enzyme in this species is believed to be ubiquinone. Couples the redox reaction to proton translocation (for every two electrons transferred, four hydrogen ions are translocated across the cytoplasmic membrane), and thus conserves the redox energy in a proton gradient. This chain is NADH-quinone oxidoreductase subunit I 2, found in Geobacter sulfurreducens (strain ATCC 51573 / DSM 12127 / PCA).